Here is a 176-residue protein sequence, read N- to C-terminus: RNA pyrophosphohydrolase (176 aa).

Positions 6–149 (GYRPNVGIVI…KRDVYRRVMK (144 aa)) constitute a Nudix hydrolase domain. Residues 38–59 (GGINPGESAEQAMYRELFEEVG) carry the Nudix box motif.

The protein belongs to the Nudix hydrolase family. RppH subfamily. It depends on a divalent metal cation as a cofactor.

In terms of biological role, accelerates the degradation of transcripts by removing pyrophosphate from the 5'-end of triphosphorylated RNA, leading to a more labile monophosphorylated state that can stimulate subsequent ribonuclease cleavage. In Escherichia fergusonii (strain ATCC 35469 / DSM 13698 / CCUG 18766 / IAM 14443 / JCM 21226 / LMG 7866 / NBRC 102419 / NCTC 12128 / CDC 0568-73), this protein is RNA pyrophosphohydrolase.